The chain runs to 531 residues: Pancreatic secretory granule membrane major glycoprotein GP2 (531 aa).

The first 21 residues, 1–21 (MVGCDLLWLAAASCVLTLVSP), serve as a signal peptide directing secretion. Residue Asn33 is glycosylated (N-linked (GlcNAc...) asparagine). Residues 34-53 (SSNLDLDCGSPDSPSSGICF) are beta hairpin. Disulfide bonds link Cys41-Cys52, Cys56-Cys151, Cys79-Cys169, Cys101-Cys139, Cys107-Cys174, Cys132-Cys140, Cys184-Cys194, Cys188-Cys203, Cys205-Cys235, Cys223-Cys314, and Cys255-Cys278. The interval 54–74 (DPCQNHTVLNDPTRSTENNDS) is D10C. N-linked (GlcNAc...) asparagine glycans are attached at residues Asn58 and Asn72. The 45-residue stretch at 180-224 (APKNCEITCRPEEECVFQNNNWSCVCRQDLHVSDSQSLQPLLDCG) folds into the EGF-like domain. Asn200 carries an N-linked (GlcNAc...) asparagine glycan. The tract at residues 222–315 (DCGDNEIKVK…FRVNVNFQCA (94 aa)) is ZP-N. Residues 222-478 (DCGDNEIKVK…PSCSTNRLRS (257 aa)) enclose the ZP domain. N-linked (GlcNAc...) asparagine glycosylation is found at Asn256 and Asn285. Positions 316–339 (YPLDMSVSLETALQPIVSSLTVDV) are flexible ZP-N/ZP-C linker. The segment at 340–351 (DGAGEFNVKMAL) is internal hydrophobic patch (IHP). Residues 340 to 478 (DGAGEFNVKM…PSCSTNRLRS (139 aa)) are ZP-C. Cystine bridges form between Cys395–Cys455, Cys416–Cys471, and Cys460–Cys467. An external hydrophobic patch (EHP) region spans residues 485 to 493 (YNRVLDLGP).

In terms of assembly, interacts with SYCN. Interacts with bacterial adhesin fimH. In terms of processing, N-glycosylated. In terms of tissue distribution, specifically expressed by M (microfold) cells which are atypical epithelial cells of the intestine.

The protein localises to the zymogen granule membrane. It localises to the secreted. The protein resides in the cell membrane. It is found in the apical cell membrane. Its subcellular location is the membrane raft. The protein localises to the endosome. Functions as an intestinal M-cell transcytotic receptor specific of type-I-piliated bacteria that participates in the mucosal immune response toward these bacteria. At the apical membrane of M-cells it binds fimH, a protein of the bacteria type I pilus tip. Internalizes bound bacteria, like E.coli and S.typhimurium, from the lumen of the intestine and delivers them, through M-cells, to the underlying organized lymphoid follicles where they are captured by antigen-presenting dendritic cells to elicit a mucosal immune response. The sequence is that of Pancreatic secretory granule membrane major glycoprotein GP2 from Mus musculus (Mouse).